The primary structure comprises 46 residues: Defensin-like protein AX2 (46 aa).

4 disulfide bridges follow: Cys3–Cys46, Cys14–Cys34, Cys20–Cys40, and Cys24–Cys42.

As to expression, leaves and flowers.

Its function is as follows. Strong inhibiting activity against C.beticola and other filamentous fungi. Little or no effect against bacteria. The sequence is that of Defensin-like protein AX2 from Beta vulgaris (Sugar beet).